We begin with the raw amino-acid sequence, 128 residues long: Ribonuclease P protein component (128 aa).

The protein belongs to the RnpA family. In terms of assembly, consists of a catalytic RNA component (M1 or rnpB) and a protein subunit.

The enzyme catalyses Endonucleolytic cleavage of RNA, removing 5'-extranucleotides from tRNA precursor.. Functionally, RNaseP catalyzes the removal of the 5'-leader sequence from pre-tRNA to produce the mature 5'-terminus. It can also cleave other RNA substrates such as 4.5S RNA. The protein component plays an auxiliary but essential role in vivo by binding to the 5'-leader sequence and broadening the substrate specificity of the ribozyme. This Parasynechococcus marenigrum (strain WH8102) protein is Ribonuclease P protein component.